The sequence spans 37 residues: Large ribosomal subunit protein bL36c (37 aa).

This sequence belongs to the bacterial ribosomal protein bL36 family.

It localises to the plastid. It is found in the chloroplast. This Lactuca sativa (Garden lettuce) protein is Large ribosomal subunit protein bL36c.